Consider the following 444-residue polypeptide: Killer cell immunoglobulin-like receptor 3DL1 (444 aa).

The N-terminal stretch at 1-21 (MSLMVVSMACVGLFLVQRAGP) is a signal peptide. Residues 22-340 (HMGGQDKPFL…SKSGNPRHLH (319 aa)) lie on the Extracellular side of the membrane. 3 Ig-like C2-type domains span residues 42-102 (GGHV…HPHS), 137-202 (GERV…VTHT), and 237-300 (GESV…FRHS). 3 cysteine pairs are disulfide-bonded: cysteine 49–cysteine 95, cysteine 144–cysteine 195, and cysteine 244–cysteine 293. 3 N-linked (GlcNAc...) asparagine glycosylation sites follow: asparagine 92, asparagine 179, and asparagine 273. The tract at residues 315–334 (VTGNPSSSWPSPTEPSSKSG) is disordered. Over residues 319 to 333 (PSSSWPSPTEPSSKS) the composition is skewed to low complexity. A helical transmembrane segment spans residues 341–360 (ILIGTSVVIILFILLLFFLL). Residues 361-444 (HLWCSNKKNA…KPRSKVVSCP (84 aa)) lie on the Cytoplasmic side of the membrane. 2 disordered regions span residues 375–394 (QEPA…QDPE) and 409–444 (RKIT…VSCP).

This sequence belongs to the immunoglobulin superfamily.

The protein resides in the cell membrane. In terms of biological role, receptor on natural killer (NK) cells for HLA Bw4 allele. Inhibits the activity of NK cells thus preventing cell lysis. The polypeptide is Killer cell immunoglobulin-like receptor 3DL1 (Homo sapiens (Human)).